Here is a 138-residue protein sequence, read N- to C-terminus: Mini-ribonuclease 3 (138 aa).

Residue Asp33 is part of the active site.

Belongs to the MrnC RNase family. Homodimer. The cofactor is Mg(2+).

It is found in the cytoplasm. Involved in correct processing of both the 5' and 3' ends of 23S rRNA precursor. Processes 30S rRNA precursor transcript even in absence of ribonuclease 3 (Rnc); Rnc processes 30S rRNA into smaller rRNA precursors. The chain is Mini-ribonuclease 3 from Synechococcus sp. (strain ATCC 27144 / PCC 6301 / SAUG 1402/1) (Anacystis nidulans).